We begin with the raw amino-acid sequence, 663 residues long: UvrABC system protein B (663 aa).

The 388-residue stretch at 31 to 418 (DNIEGGEKAQ…TDTVVEQIIR (388 aa)) folds into the Helicase ATP-binding domain. Residue 44–51 (GATGTGKT) coordinates ATP. The Beta-hairpin motif lies at 97-120 (YYDYYQPEAYVPSSDTYIEKDSSV). A Helicase C-terminal domain is found at 435–601 (QMDDLLGEIN…TIKKEIRDLI (167 aa)). The region spanning 627-662 (QAEIKALQQQMQEAAELLDFELAAQIRDVILELKAI) is the UVR domain.

The protein belongs to the UvrB family. In terms of assembly, forms a heterotetramer with UvrA during the search for lesions. Interacts with UvrC in an incision complex.

The protein resides in the cytoplasm. In terms of biological role, the UvrABC repair system catalyzes the recognition and processing of DNA lesions. A damage recognition complex composed of 2 UvrA and 2 UvrB subunits scans DNA for abnormalities. Upon binding of the UvrA(2)B(2) complex to a putative damaged site, the DNA wraps around one UvrB monomer. DNA wrap is dependent on ATP binding by UvrB and probably causes local melting of the DNA helix, facilitating insertion of UvrB beta-hairpin between the DNA strands. Then UvrB probes one DNA strand for the presence of a lesion. If a lesion is found the UvrA subunits dissociate and the UvrB-DNA preincision complex is formed. This complex is subsequently bound by UvrC and the second UvrB is released. If no lesion is found, the DNA wraps around the other UvrB subunit that will check the other stand for damage. This is UvrABC system protein B from Streptococcus agalactiae serotype III (strain NEM316).